The sequence spans 100 residues: Small ribosomal subunit protein bS6 (100 aa).

Belongs to the bacterial ribosomal protein bS6 family.

In terms of biological role, binds together with bS18 to 16S ribosomal RNA. The sequence is that of Small ribosomal subunit protein bS6 from Tropheryma whipplei (strain Twist) (Whipple's bacillus).